The chain runs to 291 residues: Probable 2-(5''-triphosphoribosyl)-3'-dephosphocoenzyme-A synthase (291 aa).

This sequence belongs to the CitG/MdcB family.

The enzyme catalyses 3'-dephospho-CoA + ATP = 2'-(5''-triphospho-alpha-D-ribosyl)-3'-dephospho-CoA + adenine. Involved in the formation of 2-(5''-phosphoribosyl)-3'-dephosphocoenzyme-A, the prosthetic group of the acyl-carrier protein of the malonate decarboxylase. This chain is Probable 2-(5''-triphosphoribosyl)-3'-dephosphocoenzyme-A synthase, found in Pseudomonas savastanoi pv. phaseolicola (strain 1448A / Race 6) (Pseudomonas syringae pv. phaseolicola (strain 1448A / Race 6)).